The primary structure comprises 270 residues: Phosphatidate cytidylyltransferase (270 aa).

A run of 7 helical transmembrane segments spans residues 19–39 (LWLT…IGLA), 53–73 (TAFS…LLIL), 76–96 (GALL…VTQW), 101–121 (GWPA…SLLR), 126–146 (FGFT…IAAY), 183–203 (LVAS…ALLL), and 248–268 (ALLY…AIFF).

This sequence belongs to the CDS family.

It is found in the cell inner membrane. The catalysed reaction is a 1,2-diacyl-sn-glycero-3-phosphate + CTP + H(+) = a CDP-1,2-diacyl-sn-glycerol + diphosphate. The protein operates within phospholipid metabolism; CDP-diacylglycerol biosynthesis; CDP-diacylglycerol from sn-glycerol 3-phosphate: step 3/3. This Brucella suis biovar 1 (strain 1330) protein is Phosphatidate cytidylyltransferase (cdsA).